A 115-amino-acid polypeptide reads, in one-letter code: Large ribosomal subunit protein bL19 (115 aa).

This sequence belongs to the bacterial ribosomal protein bL19 family.

Functionally, this protein is located at the 30S-50S ribosomal subunit interface and may play a role in the structure and function of the aminoacyl-tRNA binding site. The sequence is that of Large ribosomal subunit protein bL19 from Brevibacillus brevis (strain 47 / JCM 6285 / NBRC 100599).